The chain runs to 104 residues: UPF0213 protein plu4503 (104 aa).

Residues 4-79 (NQWVLYLLKT…KQLSKQQKER (76 aa)) enclose the GIY-YIG domain.

The protein belongs to the UPF0213 family.

The polypeptide is UPF0213 protein plu4503 (Photorhabdus laumondii subsp. laumondii (strain DSM 15139 / CIP 105565 / TT01) (Photorhabdus luminescens subsp. laumondii)).